A 347-amino-acid chain; its full sequence is Eukaryotic translation initiation factor 3 subunit I (347 aa).

WD repeat units lie at residues 8 to 47, 50 to 89, 150 to 190, 192 to 233, and 289 to 328; these read GHER…RLGT, DHSG…AVHS, EQAT…VQAK, IHEK…KTYK, and GHFG…FDFK.

It belongs to the eIF-3 subunit I family. Component of the eukaryotic translation initiation factor 3 (eIF-3) complex.

Its subcellular location is the cytoplasm. Component of the eukaryotic translation initiation factor 3 (eIF-3) complex, which is involved in protein synthesis of a specialized repertoire of mRNAs and, together with other initiation factors, stimulates binding of mRNA and methionyl-tRNAi to the 40S ribosome. The eIF-3 complex specifically targets and initiates translation of a subset of mRNAs involved in cell proliferation. This Kluyveromyces lactis (strain ATCC 8585 / CBS 2359 / DSM 70799 / NBRC 1267 / NRRL Y-1140 / WM37) (Yeast) protein is Eukaryotic translation initiation factor 3 subunit I.